The chain runs to 431 residues: Trigger factor (431 aa).

Residues 165–250 (GDTVVIDFDG…IHELKRKELP (86 aa)) form the PPIase FKBP-type domain.

This sequence belongs to the FKBP-type PPIase family. Tig subfamily.

It localises to the cytoplasm. The enzyme catalyses [protein]-peptidylproline (omega=180) = [protein]-peptidylproline (omega=0). Functionally, involved in protein export. Acts as a chaperone by maintaining the newly synthesized protein in an open conformation. Functions as a peptidyl-prolyl cis-trans isomerase. This is Trigger factor from Leuconostoc mesenteroides subsp. mesenteroides (strain ATCC 8293 / DSM 20343 / BCRC 11652 / CCM 1803 / JCM 6124 / NCDO 523 / NBRC 100496 / NCIMB 8023 / NCTC 12954 / NRRL B-1118 / 37Y).